The sequence spans 343 residues: MKNVDLVIDLQFGSTGKGLIAGYLAEKNGYDTVINANMPNAGHTYINAEGRKWMHKVLPNGIVSPNLKRVMLGAGSVFSINRLMEEIEMSKDLLHDKVAILIHPMATVLDEEAHKKAEVGIATSIGSTGQGSMAAMVEKLQRDPTNNTIVARDVAQYDGRIAQYVCTVEEWDMALMASERILAEGAQGFSLSLNQEFYPYCTSRDCTPARFLADMGIPLPMLNKVIGTARCHPIRVGGTSGGHYPDQEELTWEQLGQVPELTTVTKKVRRVFSFSFIQMQKAMWTCQPDEVFLNFCNYLSPMGWQDIVHQIEVAAQSRYCDAEVKYLGFGPTFNDVELREDVM.

S14 serves as the catalytic Proton acceptor. Positions 14, 15, 16, 17, and 18 each coordinate ATP. S14 provides a ligand contact to dGMP. A Mg(2+)-binding site is contributed by S14. A dGMP-binding site is contributed by N40. Residues G42, H43, and T44 each coordinate ATP. G42 contributes to the Mg(2+) binding site. DGMP contacts are provided by S127, T128, and R142. Q187 is a binding site for ATP. Position 202 (T202) interacts with dGMP. T263 provides a ligand contact to Mg(2+). Residues T263, V264, and R269 each contribute to the L-aspartate site. 3 residues coordinate ATP: N294, N297, and G330.

This sequence belongs to the Caudovirales PurZ family. Mg(2+) serves as cofactor.

The enzyme catalyses dGMP + L-aspartate + ATP = (2S)-2-amino-2'-deoxyadenylo-succinate + ADP + phosphate + 2 H(+). Its pathway is purine metabolism. Involved in the synthesis of the atypical nucleotide dZTP (2-amino-2'-deoxyadenosine-5'-triphosphate). Catalyzes the condensation of aspartate with deoxyguanylate into dSMP (N6-succino-2-amino-2'-deoxyadenylate), which undergoes defumarylation and phosphorylation respectively by host PurB and guanylate/nucleoside diphosphate kinases to give dZTP. dZTP is integrated into the viral genome instead of adenine by the viral DNA polymerase. This Z-base probably completely replaces adenosine and forms a triple bond to the opposite T-base. The resulting non-standard viral DNA is called Z-genome. The chemically modified DNA is probably harder for the host bacteria to digest with nucleases or restriction enzymes. This is N6-succino-2-amino-2'-deoxyadenylate synthase from Vibrio phage phiVC8.